The chain runs to 238 residues: Ribonuclease 3 (238 aa).

An RNase III domain is found at 4–127; the sequence is IEEFEKRLGY…TMGAIYLETG (124 aa). Glu40 provides a ligand contact to Mg(2+). Asp44 is an active-site residue. Positions 113 and 116 each coordinate Mg(2+). Residue Glu116 is part of the active site. Residues 154–223 form the DRBM domain; the sequence is DYKTALQELT…ARIALEIFHR (70 aa).

It belongs to the ribonuclease III family. As to quaternary structure, homodimer. Mg(2+) serves as cofactor.

The protein resides in the cytoplasm. The catalysed reaction is Endonucleolytic cleavage to 5'-phosphomonoester.. In terms of biological role, digests double-stranded RNA. Involved in the processing of primary rRNA transcript to yield the immediate precursors to the large and small rRNAs (23S and 16S). Processes some mRNAs, and tRNAs when they are encoded in the rRNA operon. Processes pre-crRNA and tracrRNA of type II CRISPR loci if present in the organism. In Wolinella succinogenes (strain ATCC 29543 / DSM 1740 / CCUG 13145 / JCM 31913 / LMG 7466 / NCTC 11488 / FDC 602W) (Vibrio succinogenes), this protein is Ribonuclease 3.